Reading from the N-terminus, the 297-residue chain is Protease HtpX homolog (297 aa).

2 consecutive transmembrane segments (helical) span residues 14–34 and 38–58; these read IVLLFVFFILVALVGAAVGYL and SLETGVVAAIVIGAIYTIIMV. Histidine 144 provides a ligand contact to Zn(2+). The active site involves glutamate 145. Histidine 148 is a binding site for Zn(2+). Helical transmembrane passes span 159-179 and 199-219; these read IALALAAAITLLTNIGGNWWF and ILLLVFSILMMVLAPLAAAAI. Glutamate 228 is a binding site for Zn(2+).

It belongs to the peptidase M48B family. The cofactor is Zn(2+).

The protein localises to the cell membrane. The sequence is that of Protease HtpX homolog from Leuconostoc mesenteroides subsp. mesenteroides (strain ATCC 8293 / DSM 20343 / BCRC 11652 / CCM 1803 / JCM 6124 / NCDO 523 / NBRC 100496 / NCIMB 8023 / NCTC 12954 / NRRL B-1118 / 37Y).